The primary structure comprises 623 residues: 1-butanol dehydrogenase (quinone) (623 aa).

An N-terminal signal peptide occupies residues 1-28 (MKKSHAKPFALRAIVVATAAALSLPAAA). Ca(2+) contacts are provided by aspartate 40, threonine 43, and aspartate 46. Glutamate 90 contributes to the pyrroloquinoline quinone binding site. The cysteines at positions 134 and 135 are disulfide-linked. Residues arginine 140, threonine 184, and 202–204 (HGS) contribute to the pyrroloquinoline quinone site. Glutamate 208 is a Ca(2+) binding site. The disordered stretch occupies residues 235-274 (HMGRLNGKDSTPTGDPKAPSWPDDPNSPTGKVEAWSQGGG). Ca(2+) is bound by residues asparagine 295 and aspartate 345. Residue aspartate 345 is the Proton acceptor of the active site. Arginine 374 serves as a coordination point for pyrroloquinoline quinone. The disordered stretch occupies residues 420–440 (GKPIEKDNRPPQPKEGADKGE). Alanine 592 provides a ligand contact to pyrroloquinoline quinone.

Belongs to the bacterial PQQ dehydrogenase family. Pyrroloquinoline quinone serves as cofactor. It depends on Ca(2+) as a cofactor.

It localises to the periplasm. It carries out the reaction butan-1-ol + a quinone = butanal + a quinol. Involved in the metabolism of butane. May function primarily in energy generation. Catalyzes the oxidation of 1-butanol to 1-butanal. Also able to use 2-butanol and butyraldehyde, although the affinity is comparatively low. The protein is 1-butanol dehydrogenase (quinone) of Thauera butanivorans (strain ATCC 43655 / DSM 2080 / JCM 20651 / CCUG 51053 / NBRC 103042 / IAM 12574 / Bu B1211) (Pseudomonas butanovora).